The following is a 301-amino-acid chain: Vomeronasal type-1 receptor 4 (301 aa).

The Extracellular portion of the chain corresponds to 1-15 (MASRYVAVGMMLSQT). A helical membrane pass occupies residues 16 to 36 (VVGVLGSFSLLLHYLSLHYIG). The Cytoplasmic segment spans residues 37 to 48 (CRLRSADLIVKH). A helical membrane pass occupies residues 49–69 (LIAASFLTLLCKGVPQTMAAF). Residues 70 to 88 (RVRYFLNAIGCKLVFYLHR) lie on the Extracellular side of the membrane. Residues 89–107 (VGRGVSTGTTCLLSVFQVI) traverse the membrane as a helical segment. Residues 108–126 (TVSSRKSRWAKLKEKAPKH) are Cytoplasmic-facing. The chain crosses the membrane as a helical span at residues 127–147 (VGFSVLLCWILCMLVNIIFPI). Topologically, residues 148-185 (YVTGKRNHTNITVNKDLGDCCGRGNNKIAQTLRAMLLS) are extracellular. 2 N-linked (GlcNAc...) asparagine glycosylation sites follow: N154 and N157. The helical transmembrane segment at 186–206 (FPDVLCLGFMLWASSSMVCIL) threads the bilayer. Residues 207 to 234 (HRHKQRVQHIHRSNLSPRASPENRATQS) lie on the Cytoplasmic side of the membrane. A helical membrane pass occupies residues 235–255 (ILIPVSTFVSSYTLSCLLQVC). Topologically, residues 256–264 (MALLDNPNS) are extracellular. The helical transmembrane segment at 265-285 (LLVNTSALMSACFPTLSPFVL) threads the bilayer. At 286 to 301 (MSCDPSVYRLCFAWKR) the chain is on the cytoplasmic side.

It belongs to the G-protein coupled receptor 1 family.

Its subcellular location is the cell membrane. Functionally, putative pheromone receptor. The protein is Vomeronasal type-1 receptor 4 (VN1R4) of Pongo pygmaeus (Bornean orangutan).